Reading from the N-terminus, the 249-residue chain is Tetrahydromethanopterin S-methyltransferase subunit A (249 aa).

Over 1–227 (MADKKEVIQN…KISSGYYAGK (227 aa)) the chain is Cytoplasmic. A 5-hydroxybenzimidazolylcob(I)amide-binding site is contributed by H84. A helical membrane pass occupies residues 228–248 (IEGIVIGFILTLVFLIIIIQG). Residue L249 is a topological domain, extracellular.

It belongs to the MtrA family. In terms of assembly, the complex is composed of 8 subunits; MtrA, MtrB, MtrC, MtrD, MtrE, MtrF, MtrG and MtrH. 5-hydroxybenzimidazolylcob(I)amide serves as cofactor.

Its subcellular location is the cell membrane. The enzyme catalyses 5-methyl-5,6,7,8-tetrahydromethanopterin + coenzyme M + 2 Na(+)(in) = 5,6,7,8-tetrahydromethanopterin + methyl-coenzyme M + 2 Na(+)(out). It functions in the pathway one-carbon metabolism; methanogenesis from CO(2); methyl-coenzyme M from 5,10-methylene-5,6,7,8-tetrahydromethanopterin: step 2/2. In terms of biological role, part of a complex that catalyzes the formation of methyl-coenzyme M and tetrahydromethanopterin from coenzyme M and methyl-tetrahydromethanopterin. This is an energy-conserving, sodium-ion translocating step. The polypeptide is Tetrahydromethanopterin S-methyltransferase subunit A (Methanosphaera stadtmanae (strain ATCC 43021 / DSM 3091 / JCM 11832 / MCB-3)).